Consider the following 446-residue polypeptide: Gamma-glutamyl phosphate reductase (446 aa).

This sequence belongs to the gamma-glutamyl phosphate reductase family.

The protein resides in the cytoplasm. The enzyme catalyses L-glutamate 5-semialdehyde + phosphate + NADP(+) = L-glutamyl 5-phosphate + NADPH + H(+). It functions in the pathway amino-acid biosynthesis; L-proline biosynthesis; L-glutamate 5-semialdehyde from L-glutamate: step 2/2. Functionally, catalyzes the NADPH-dependent reduction of L-glutamate 5-phosphate into L-glutamate 5-semialdehyde and phosphate. The product spontaneously undergoes cyclization to form 1-pyrroline-5-carboxylate. This Sulfurihydrogenibium sp. (strain YO3AOP1) protein is Gamma-glutamyl phosphate reductase.